Here is a 239-residue protein sequence, read N- to C-terminus: Small ribosomal subunit protein uS3 (239 aa).

The KH type-2 domain occupies 39–107 (VRQVLRKKMS…PVHINVIEVR (69 aa)). The tract at residues 214 to 239 (SQEKQDDGSRGDRNADRSSRRSREVR) is disordered. Residues 216-239 (EKQDDGSRGDRNADRSSRRSREVR) show a composition bias toward basic and acidic residues.

The protein belongs to the universal ribosomal protein uS3 family. In terms of assembly, part of the 30S ribosomal subunit. Forms a tight complex with proteins S10 and S14.

Its function is as follows. Binds the lower part of the 30S subunit head. Binds mRNA in the 70S ribosome, positioning it for translation. This chain is Small ribosomal subunit protein uS3, found in Xylella fastidiosa (strain M23).